Consider the following 205-residue polypeptide: Pre-rRNA-processing protein TSR2 (205 aa).

Residues 144 to 205 (SKRVVHIEGD…LVQPKGRRKH (62 aa)) form a disordered region. Residues 152-177 (GDDDEDDEDVEDYDDEDEDEEMDEVV) show a composition bias toward acidic residues.

This sequence belongs to the TSR2 family. Interacts with RPS26A.

It localises to the cytoplasm. Its subcellular location is the nucleus. Functionally, required for 20S pre-rRNA processing. The sequence is that of Pre-rRNA-processing protein TSR2 from Saccharomyces cerevisiae (strain ATCC 204508 / S288c) (Baker's yeast).